We begin with the raw amino-acid sequence, 467 residues long: RuvB-like helicase 2 (467 aa).

Residue 73-80 coordinates ATP; sequence GPPSTGKT.

It belongs to the RuvB family. May form heterododecamers with RVB1. Component of the SWR1 chromatin remodeling complex, the INO80 chromatin remodeling complex, and of the R2TP complex.

Its subcellular location is the nucleus. It catalyses the reaction ATP + H2O = ADP + phosphate + H(+). Its function is as follows. DNA helicase which participates in several chromatin remodeling complexes, including the SWR1 and the INO80 complexes. The SWR1 complex mediates the ATP-dependent exchange of histone H2A for the H2A variant HZT1 leading to transcriptional regulation of selected genes by chromatin remodeling. The INO80 complex remodels chromatin by shifting nucleosomes and is involved in DNA repair. Also involved in pre-rRNA processing. The sequence is that of RuvB-like helicase 2 (RVB2) from Kluyveromyces lactis (strain ATCC 8585 / CBS 2359 / DSM 70799 / NBRC 1267 / NRRL Y-1140 / WM37) (Yeast).